Here is a 316-residue protein sequence, read N- to C-terminus: Acetyl-coenzyme A carboxylase carboxyl transferase subunit beta (316 aa).

One can recognise a CoA carboxyltransferase N-terminal domain in the interval 39 to 308 (LWHKCSKCGV…TPPMVLWETM (270 aa)). Zn(2+) contacts are provided by C43, C46, C62, and C65. Residues 43-65 (CSKCGVLTYTKDLRANQMVCVEC) form a C4-type zinc finger.

It belongs to the AccD/PCCB family. As to quaternary structure, acetyl-CoA carboxylase is a heterohexamer composed of biotin carboxyl carrier protein (AccB), biotin carboxylase (AccC) and two subunits each of ACCase subunit alpha (AccA) and ACCase subunit beta (AccD). Requires Zn(2+) as cofactor.

The protein localises to the cytoplasm. The enzyme catalyses N(6)-carboxybiotinyl-L-lysyl-[protein] + acetyl-CoA = N(6)-biotinyl-L-lysyl-[protein] + malonyl-CoA. The protein operates within lipid metabolism; malonyl-CoA biosynthesis; malonyl-CoA from acetyl-CoA: step 1/1. Component of the acetyl coenzyme A carboxylase (ACC) complex. Biotin carboxylase (BC) catalyzes the carboxylation of biotin on its carrier protein (BCCP) and then the CO(2) group is transferred by the transcarboxylase to acetyl-CoA to form malonyl-CoA. The chain is Acetyl-coenzyme A carboxylase carboxyl transferase subunit beta from Nostoc sp. (strain PCC 7120 / SAG 25.82 / UTEX 2576).